The following is an 830-amino-acid chain: uncharacterized protein (830 aa).

Positions 1–12 (MEKASKNKESGV) are enriched in basic and acidic residues. Residues 1 to 61 (MEKASKNKES…SIKSKNKKKT (61 aa)) are disordered. The span at 15–25 (ANNSFLQNFGV) shows a compositional bias: polar residues. The 185-residue stretch at 249–433 (TVSKSSASGG…YSLVKFLHIN (185 aa)) folds into the Helicase ATP-binding domain. 262-269 (DDMGLGKT) lines the ATP pocket. Positions 384-387 (DEAH) match the DEAH box motif. Positions 662–816 (EEDDTVRGLR…KSVFTSKKLT (155 aa)) constitute a Helicase C-terminal domain. S712 carries the post-translational modification Phosphoserine.

It belongs to the SNF2/RAD54 helicase family.

The protein resides in the nucleus. This is an uncharacterized protein from Schizosaccharomyces pombe (strain 972 / ATCC 24843) (Fission yeast).